The sequence spans 348 residues: MMFTSESDLMRTIDWNEESNSVVLVDQTLLPQEYKVIECKTLSSLCEAIKSLRIRGAPALGAAGGFGIALAASLSGAKDLESMTRDLKVAAKALKSTRSTAVNLGWGVDRVLNAISDAFDVQGARDIALQEARDIAEEDIATNKLIGKYGTKFLKDGDSVLTHCNAGRLACVDWGTALGVVRSAIEEGKEIKVIACETRPLNQGSRITTWELMQDKIPVTLIADSMAGWAMHQGLVDSVLVGADRITQDVVFNKIGTYTHSILAKEHEIPFYVAAPISTFDFKGWEGSVKIEMRDPDELRFSGCQQLAPKDVEVYNPAFDATPMENVTAIITDKGVFYPPFLLDEVLV.

Substrate is bound by residues 55–57 (RGA), arginine 98, and glutamine 203. Aspartate 244 acts as the Proton donor in catalysis. 253–254 (NK) is a substrate binding site.

The protein belongs to the eIF-2B alpha/beta/delta subunits family. MtnA subfamily.

It carries out the reaction 5-(methylsulfanyl)-alpha-D-ribose 1-phosphate = 5-(methylsulfanyl)-D-ribulose 1-phosphate. Functionally, catalyzes the interconversion of methylthioribose-1-phosphate (MTR-1-P) into methylthioribulose-1-phosphate (MTRu-1-P). This Methanosarcina acetivorans (strain ATCC 35395 / DSM 2834 / JCM 12185 / C2A) protein is Putative methylthioribose-1-phosphate isomerase.